Reading from the N-terminus, the 597-residue chain is Gigaxonin (597 aa).

The 70-residue stretch at C30–E99 folds into the BTB domain. The BACK domain occupies C134 to L236. Kelch repeat units follow at residues C274 to G326, F327 to G374, L376 to K421, K422 to M468, L470 to A522, and S528 to R574.

In terms of assembly, interacts with TBCB. Interacts with CUL3. Part of a complex that contains CUL3, RBX1 and GAN. Interacts (via BTB domain) with UBA1. Interacts (via Kelch domains) with MAP1B (via C-terminus) and MAP1S (via C-terminus). Post-translationally, ubiquitinated by E3 ubiquitin ligase complex formed by CUL3 and RBX1 and probably targeted for proteasome-independent degradation. In terms of tissue distribution, expressed in brain, heart and muscle.

The protein resides in the cytoplasm. It is found in the cytoskeleton. It participates in protein modification; protein ubiquitination. Functionally, probable cytoskeletal component that directly or indirectly plays an important role in neurofilament architecture. May act as a substrate-specific adapter of an E3 ubiquitin-protein ligase complex which mediates the ubiquitination and subsequent proteasomal degradation of target proteins. Controls degradation of TBCB. Controls degradation of MAP1B and MAP1S, and is critical for neuronal maintenance and survival. The protein is Gigaxonin (GAN) of Homo sapiens (Human).